The primary structure comprises 206 residues: Octanoyltransferase (206 aa).

The BPL/LPL catalytic domain maps to 30–206 (PETNDEIWLV…EFVTLLNNSI (177 aa)). Substrate contacts are provided by residues 69–76 (RGGQVTYH), 137–139 (SLG), and 150–152 (GIA). The active-site Acyl-thioester intermediate is Cys-168.

It belongs to the LipB family.

The protein localises to the cytoplasm. The enzyme catalyses octanoyl-[ACP] + L-lysyl-[protein] = N(6)-octanoyl-L-lysyl-[protein] + holo-[ACP] + H(+). It participates in protein modification; protein lipoylation via endogenous pathway; protein N(6)-(lipoyl)lysine from octanoyl-[acyl-carrier-protein]: step 1/2. Catalyzes the transfer of endogenously produced octanoic acid from octanoyl-acyl-carrier-protein onto the lipoyl domains of lipoate-dependent enzymes. Lipoyl-ACP can also act as a substrate although octanoyl-ACP is likely to be the physiological substrate. The protein is Octanoyltransferase of Francisella tularensis subsp. mediasiatica (strain FSC147).